Here is a 476-residue protein sequence, read N- to C-terminus: Retinoic acid receptor gamma (476 aa).

Residues methionine 1 to proline 109 are modulating. Over residues serine 81–serine 96 the composition is skewed to low complexity. The segment at serine 81–proline 102 is disordered. NR C4-type zinc fingers lie at residues cysteine 110 to cysteine 130 and cysteine 146 to cysteine 170. The nuclear receptor DNA-binding region spans cysteine 110–methionine 175. Positions serine 176 to proline 205 are hinge. Positions arginine 184–lysine 189 match the Nuclear localization signal motif. The 235-residue stretch at glutamate 206–proline 440 folds into the NR LBD domain. The disordered stretch occupies residues glutamate 435–proline 476. The segment covering asparagine 462–proline 476 has biased composition (polar residues).

The protein belongs to the nuclear hormone receptor family. NR1 subfamily. As to quaternary structure, heterodimer; with a rxr molecule. Binds DNA preferentially as a rar/rxr heterodimer. In terms of tissue distribution, expressed in embryos, tadpoles and various adult tissue such as kidney, testis, brain, liver, skeletal muscle and spleen.

The protein resides in the nucleus. Functionally, receptor for retinoic acid. Retinoic acid receptors bind as heterodimers to their target response elements in response to their ligands, all-trans or 9-cis retinoic acid, and regulate gene expression in various biological processes. The rar/rxr heterodimers bind to the retinoic acid response elements (RARE) composed of tandem 5'-AGGTCA-3' sites known as DR1-DR5. The chain is Retinoic acid receptor gamma (rarg) from Xenopus laevis (African clawed frog).